Reading from the N-terminus, the 853-residue chain is Transforming growth factor beta receptor type 3 (853 aa).

An N-terminal signal peptide occupies residues 1–23; the sequence is MAVTSHHMIPVMVVLMSACLATA. Residues 24–789 are Extracellular-facing; that stretch reads GPEPSTRCEL…IFHGLDTLTV (766 aa). 3 N-linked (GlcNAc...) asparagine glycosylation sites follow: Asn-37, Asn-144, and Asn-493. Residues Cys-55 and Cys-200 are joined by a disulfide bond. In terms of domain architecture, ZP spans 456-730; sequence KCDHEKMVVA…PRCVTPDDAC (275 aa). Residues 530–559 are disordered; that stretch reads SPGDSSGWPDGYEDLESGDNGFPGDGDEGE. 2 O-linked (Xyl...) (glycosaminoglycan) serine glycosylation sites follow: Ser-535 and Ser-546. Residues Asn-572, Asn-591, and Asn-698 are each glycosylated (N-linked (GlcNAc...) asparagine). 3 disulfides stabilise this stretch: Cys-640–Cys-706, Cys-661–Cys-730, and Cys-711–Cys-723. The interval 737–751 is interaction with TGF-beta ligand; sequence MIWTMMQNKKTFTKP. The helical transmembrane segment at 790–811 threads the bilayer; it reads MGIAFAAFVIGALLTGALWYIY. Residues 812–853 lie on the Cytoplasmic side of the membrane; the sequence is SHTGETARRQQVPTSPPASENSSAAHSIGSTQSTPCSSSSTA. The span at 820-836 shows a compositional bias: polar residues; that stretch reads RQQVPTSPPASENSSAA. The tract at residues 820–853 is disordered; it reads RQQVPTSPPASENSSAAHSIGSTQSTPCSSSSTA. A compositionally biased stretch (low complexity) spans 838-853; it reads SIGSTQSTPCSSSSTA. A Phosphothreonine modification is found at Thr-842.

Forms homodimers and homooligomers. Interacts with DYNLT4. Interacts with integrin ITGA5:ITGB1; this interaction promotes the internalization and trafficking of ITGA5:ITGB1 into endocytic vesicles. Interacts with TGFB1, BMP2, BMP5, BMP7 or GDF5 and inhibin A via the ligand binding domains. Interacts with ALK3/BMPR1A; this interaction results in the cell surface retention of BMPR1A. Interacts with ALK6/BMPR1B; this interaction enhances BMPR1B-mediated stimulation of the BMP signaling pathway. Interacts with the scaffolding protein beta-arrestin2/ARRB2; this interaction mediates internalization of TGFBR3 and thus regulates migration, actin cytoskeleton and activation of CDC42. In terms of processing, extensively modified by glycosaminoglycan groups (GAG). Post-translationally, phosphorylated in the cytoplasmic domain by the type II receptor TGFBR2 at THR-842 to mediate recruitment of ARRB2 and subsequent internalization of TGFBR2 and TGFBR3.

The protein localises to the cell membrane. The protein resides in the secreted. Its subcellular location is the extracellular space. It is found in the extracellular matrix. Cell surface receptor that regulates diverse cellular processes including cell proliferation, differentiation, migration, and apoptosis. Initiates BMP, inhibin, and TGF-beta signaling pathways by interacting with different ligands including TGFB1, BMP2, BMP5, BMP7 or GDF5. Alternatively, acts as a cell surface coreceptor for BMP ligands, serving to enhance ligand binding by differentially regulating BMPR1A/ALK3 and BMPR1B/ALK6 receptor trafficking. Promotes epithelial cell adhesion, focal adhesion formation and integrin signaling during epithelial cell spreading on fibronectin. By interacting with the scaffolding protein beta-arrestin2/ARRB2, regulates migration or actin cytoskeleton and promotes the activation of CDC42 as well as the inhibition of NF-kappa-B. In gonadotrope cells, acts as an inhibin A coreceptor and regulates follicle-stimulating hormone (FSH) levels and female fertility. Plays a role in the inhibition of directed and random cell migration in epithelial cells by altering the actin cytoskeletal organization. Participates in epithelial-mesenchymal transformation (EMT) upon binding to BMP2 or TGFB2, by activating the PAR6/SMURF1/RHOA pathway. The protein is Transforming growth factor beta receptor type 3 (Tgfbr3) of Rattus norvegicus (Rat).